A 135-amino-acid polypeptide reads, in one-letter code: Snaclec rhodocetin subunit gamma (135 aa).

3 disulfide bridges follow: Cys4-Cys15, Cys32-Cys129, and Cys104-Cys121. The C-type lectin domain maps to 11-130 (YDQHCYQAFN…CQAKNPFVCK (120 aa)).

Belongs to the snaclec family. Heterotetramer of subunit alpha, beta, gamma and delta; only the gamma and the delta subunits are disulfide-linked. Alpha-beta heterodimer and gamma-delta heterodimer associate orthogonally, giving a cruciform conformation. This heterotetramer may covalently dimerizes thanks to the gamma subunit. In terms of tissue distribution, expressed by the venom gland.

It is found in the secreted. In terms of biological role, potent inhibitor of collagen-induced platelet aggregation. It acts by binding to the integrin alpha2A domain and blocks collagen binding to integrin alpha-2/beta-1 (ITGA2/ITGB1). The gamma/delta subunits mainly contribute to this activity. The chain is Snaclec rhodocetin subunit gamma from Calloselasma rhodostoma (Malayan pit viper).